Here is a 711-residue protein sequence, read N- to C-terminus: MNLKLNVLTIILLPVHLLITIYSALIFIPWYFLTNAKKKNAMAKRIKAKPTSDKPGSPYRSVTHFDSLAVIDIPGADTLDKLFDHAVAKFGKKDSLGTREILSEENEMQPNGKVFKKLILGNYKWINYLEVNCRVNNFGSGLTALGLKPKNTIAIFCETRAEWMIAAQTCFKYNFPLVTLYATLGREAVVHGLNESEASYLITSVELLESKLKAALVDINCVKHIIYVDNKTINRAEYPEGLEIHSMQSVEELGAKPENLSVPPSRPTPSDMAIVMYTSGSTGRPKGVMMHHSNLIAGMTGQCERIPGLGPKDTYIGYLPLAHVLELTAEISCFTYGCRIGYSSPLTLSDQSSKIKKGSKGDCTVLKPTLMAAVPEIMDRIYKNVMSKVQEMNYVQKTLFKIGYDYKLEQIKKGYDAPLCNLILFKKVKALLGGNVRMMLSGGAPLSPQTHRFMNVCFCCPIGQGYGLTESCGAGTVTEVTDYTTGRVGAPLICCEIKLKDWQEGGYTVHDKPNPRGEIVIGGQNISMGYFKNEEKTAEDYCVDENGQRWFCTGDIGEFHPDGCLQIIDRKKDLVKLQAGEYVSLGKVEAALKNCPLIDNICAFAKSDQSYVISFVVPNQKKLTLLAQQKGVEGSWVDICNNPAMEAEILKEIREAANAMKLERFEIPIKVRLSPEPWTPETGLVTDAFKLKRKELKNHYLKDIERMYGGK.

The helical; Signal-anchor for type III membrane protein transmembrane segment at 8–28 (LTIILLPVHLLITIYSALIFI) threads the bilayer. Over 29–711 (PWYFLTNAKK…KDIERMYGGK (683 aa)) the chain is Cytoplasmic. A Phosphoserine modification is found at serine 447.

This sequence belongs to the ATP-dependent AMP-binding enzyme family. Requires Mg(2+) as cofactor. Abundant in steroidogenic tissues, also found in the kidney, brain and liver.

Its subcellular location is the mitochondrion outer membrane. It is found in the peroxisome membrane. The protein localises to the microsome membrane. It localises to the endoplasmic reticulum membrane. The protein resides in the cell membrane. It catalyses the reaction a long-chain fatty acid + ATP + CoA = a long-chain fatty acyl-CoA + AMP + diphosphate. The enzyme catalyses (5Z,8Z,11Z,14Z)-eicosatetraenoate + ATP + CoA = (5Z,8Z,11Z,14Z)-eicosatetraenoyl-CoA + AMP + diphosphate. It carries out the reaction 15-hydroxy-(5Z,8Z,11Z,13E)-eicosatetraenoate + ATP + CoA = 15-hydroxy-(5Z,8Z,11Z,13E)-eicosatetraenoyl-CoA + AMP + diphosphate. The catalysed reaction is 12-hydroxy-(5Z,8Z,10E,14Z)-eicosatetraenoate + ATP + CoA = 12-hydroxy-(5Z,8Z,10E,14Z)-eicosatetraenoyl-CoA + AMP + diphosphate. It catalyses the reaction 5-hydroxy-(6E,8Z,11Z,14Z)-eicosatetraenoate + ATP + CoA = 5-hydroxy-(6E,8Z,11Z,14Z)-eicosatetraenoyl-CoA + AMP + diphosphate. The enzyme catalyses 5,6-epoxy-(8Z,11Z,14Z)-eicosatrienoate + ATP + CoA = 5,6-epoxy-(8Z,11Z,14Z)-eicosatrienoyl-CoA + AMP + diphosphate. It carries out the reaction 14,15-epoxy-(5Z,8Z,11Z)-eicosatrienoate + ATP + CoA = 14,15-epoxy-(5Z,8Z,11Z)-eicosatrienoyl-CoA + AMP + diphosphate. The catalysed reaction is 11,12-epoxy-(5Z,8Z,14Z)-eicosatrienoate + ATP + CoA = 11,12-epoxy-(5Z,8Z,14Z)-eicosatrienoyl-CoA + AMP + diphosphate. It catalyses the reaction 8,9-epoxy-(5Z,11Z,14Z)-eicosatrienoate + ATP + CoA = 8,9-epoxy-(5Z,11Z,14Z)-eicosatrienoyl-CoA + AMP + diphosphate. The enzyme catalyses hexadecanoate + ATP + CoA = hexadecanoyl-CoA + AMP + diphosphate. It carries out the reaction (E)-hexadec-2-enoate + ATP + CoA = (2E)-hexadecenoyl-CoA + AMP + diphosphate. Both triacsin C and rosiglitazone inhibit arachidonoyl-CoA ligase activity. Catalyzes the conversion of long-chain fatty acids to their active form acyl-CoA for both synthesis of cellular lipids, and degradation via beta-oxidation. Preferentially activates arachidonate and eicosapentaenoate as substrates. Preferentially activates 8,9-EET &gt; 14,15-EET &gt; 5,6-EET &gt; 11,12-EET. Modulates glucose-stimulated insulin secretion by regulating the levels of unesterified EETs. Modulates prostaglandin E2 secretion. This chain is Long-chain-fatty-acid--CoA ligase 4 (Acsl4), found in Mus musculus (Mouse).